The primary structure comprises 621 residues: MLMAGQRGAWTMGDVVEKSLEGPLAPSTDEPSQKTGDLVEILNGEKVKFDDAGLSLILQNGLETLRMENALTDVILCVDIQEFSCHRVVLAAASNYFRAMFCNDLKEKYEKRIIIKGVDAETMHTLLDYTYTSKALITKQNVQRVLEAANLFQFLRMVDACASFLTEALNPENCVGILRLADTHSLDSLKKQVQSYIIQNFVQILNSEEFLDLPVDTLHHILKSDDLYVTEEAQVFETVMSWVRHKPSERLCLLPYVLENVRLPLLDPWYFVETVEADPLIRQCPEVFPLLQEARMYHLSGNEIISERTKPRMHEFQSEVFMIIGGCTKDERFVAEVTCLDPLRRSRLEVAKLPLTEHELESENKKWVEFACVTLKNEVYISGGKETQHDVWKYNSSINKWIQIEYLNIGRWRHKMVVLGGKVYVIGGFDGLQRINNVETYDPFHNCWSEAAPLLVHVSSFAATSHKKKLYVIGGGPNGKLATDKTQCYDPSTNKWSLKAAMPVEAKCINAVSFRDRIYVVGGAMRALYAYSPLEDSWCLVTQLSHERASCGIAPCNNRLYITGGRDEKNEVIATVLCWDPEAQKLTEECVLPRGVSHHGSVTIRKSYTHIRRIVPGAVSV.

Residues Thr72 to Lys139 enclose the BTB domain. The BACK domain maps to Cys174–Glu276. Kelch repeat units lie at residues Val320–Trp367, Glu378–Gly421, Lys422–Lys468, Leu470–Asp516, Arg517–Asn558, and Leu560–Lys606.

In terms of tissue distribution, found in germinal center B-cells.

Involved in B-lymphocyte antigen receptor signaling and germinal center formation. This Homo sapiens (Human) protein is Kelch-like protein 6 (KLHL6).